We begin with the raw amino-acid sequence, 294 residues long: uncharacterized protein (294 aa).

2 disordered regions span residues 25-59 (VQVY…RVRR) and 77-141 (LKDD…FEAP). Acidic residues predominate over residues 86–139 (YEELEDDDDDESIEEESDSEFEGESSSDEEESSYDSDSDYDSETEPEDSDDDFE). Residues 201–234 (IKFYKRNTTFTEEELAEIEEDLLAEVKARYNNMK) adopt a coiled-coil conformation. A compositionally biased stretch (basic and acidic residues) spans 242–259 (TIETTEDDKKAGEVNKYD). Residues 242–294 (TIETTEDDKKAGEVNKYDIDDDFIEKTESDEEEEITEDDSSEQETVVVEPVDE) are disordered. Over residues 260-283 (IDDDFIEKTESDEEEEITEDDSSE) the composition is skewed to acidic residues.

This is an uncharacterized protein from Magallana gigas (Pacific oyster).